Reading from the N-terminus, the 364-residue chain is UDP-3-O-acylglucosamine N-acyltransferase (364 aa).

Catalysis depends on H258, which acts as the Proton acceptor.

The protein belongs to the transferase hexapeptide repeat family. LpxD subfamily. As to quaternary structure, homotrimer.

It carries out the reaction a UDP-3-O-[(3R)-3-hydroxyacyl]-alpha-D-glucosamine + a (3R)-hydroxyacyl-[ACP] = a UDP-2-N,3-O-bis[(3R)-3-hydroxyacyl]-alpha-D-glucosamine + holo-[ACP] + H(+). The protein operates within bacterial outer membrane biogenesis; LPS lipid A biosynthesis. Functionally, catalyzes the N-acylation of UDP-3-O-acylglucosamine using 3-hydroxyacyl-ACP as the acyl donor. Is involved in the biosynthesis of lipid A, a phosphorylated glycolipid that anchors the lipopolysaccharide to the outer membrane of the cell. The sequence is that of UDP-3-O-acylglucosamine N-acyltransferase from Burkholderia orbicola (strain MC0-3).